The primary structure comprises 359 residues: MLENRVKTKQIFIGGVAIGGDAPISTQSMTFSKTADIESTKNQIDRLKLAGADLVRVAVSNEKDALALKELKRVSPLPLIADIHFHYKFALIAAQSVDAIRINPGNIGSKDKIKAVVDACKEKNIPIRIGVNAGSLEKQFDQKYGPTPKGMVESALYNAKLLEDLDFTDFKISLKASDVIRTIEAYRMLRPLVIYPFHLGVTEAGNLFSSSIKSAMALGGLLMEGIGDTMRVSITGELENEIKVARAILRHSGRLKEGINLISCPTCGRIEANLVDMASKVEKRLSHIKTPLDISVMGCVVNALGEAKHADMAIAFGNRSGLIIKEGKVIHKLAEKDLFETFVIEVENLAKEREKSLKD.

Residues C264, C267, C299, and E306 each contribute to the [4Fe-4S] cluster site.

It belongs to the IspG family. Requires [4Fe-4S] cluster as cofactor.

It catalyses the reaction (2E)-4-hydroxy-3-methylbut-2-enyl diphosphate + oxidized [flavodoxin] + H2O + 2 H(+) = 2-C-methyl-D-erythritol 2,4-cyclic diphosphate + reduced [flavodoxin]. The protein operates within isoprenoid biosynthesis; isopentenyl diphosphate biosynthesis via DXP pathway; isopentenyl diphosphate from 1-deoxy-D-xylulose 5-phosphate: step 5/6. Functionally, converts 2C-methyl-D-erythritol 2,4-cyclodiphosphate (ME-2,4cPP) into 1-hydroxy-2-methyl-2-(E)-butenyl 4-diphosphate. The polypeptide is 4-hydroxy-3-methylbut-2-en-1-yl diphosphate synthase (flavodoxin) (Helicobacter pylori (strain Shi470)).